A 420-amino-acid polypeptide reads, in one-letter code: Torsin-4A-A (420 aa).

A helical transmembrane segment spans residues 130-150 (CLLLFIGIVCFQILNAIENLD). 202-209 (GPSGVGKS) provides a ligand contact to ATP.

This sequence belongs to the ClpA/ClpB family. Torsin subfamily.

It is found in the membrane. The polypeptide is Torsin-4A-A (tor4a-a) (Xenopus laevis (African clawed frog)).